We begin with the raw amino-acid sequence, 215 residues long: Ribonuclease T (215 aa).

The Exonuclease domain maps to 20 to 194 (VVIDVETAGF…YDTERTAVLF (175 aa)). The Mg(2+) site is built by D23, E25, H181, and D186. Residue H181 is the Proton donor/acceptor of the active site.

This sequence belongs to the RNase T family. As to quaternary structure, homodimer. It depends on Mg(2+) as a cofactor.

Functionally, trims short 3' overhangs of a variety of RNA species, leaving a one or two nucleotide 3' overhang. Responsible for the end-turnover of tRNA: specifically removes the terminal AMP residue from uncharged tRNA (tRNA-C-C-A). Also appears to be involved in tRNA biosynthesis. This is Ribonuclease T from Citrobacter koseri (strain ATCC BAA-895 / CDC 4225-83 / SGSC4696).